The sequence spans 1663 residues: Glutamine-rich protein 2 (1663 aa).

Disordered regions lie at residues 80–239, 423–481, 575–615, 880–925, and 948–984; these read HGGF…LVPA, GLVQ…GTGQ, AQPR…QHGL, TYQQ…QVYP, and RGPG…APGQ. 2 stretches are compositionally biased toward polar residues: residues 84 to 103 and 131 to 150; these read TSLT…QPSI and GVSS…QQQP. Residues 171-182 show a composition bias toward basic and acidic residues; it reads SDSDRHRSREKL. Over residues 206 to 217 the composition is skewed to low complexity; sequence QPSSVPASQSQV. Basic and acidic residues predominate over residues 958–975; sequence HGQEGLDPNRTRASDRHG. Coiled coils occupy residues 1085–1160 and 1286–1325; these read KTVK…MENS and EDHR…KADK. The segment covering 1609–1619 has biased composition (basic and acidic residues); that stretch reads TRLPGILRKDS. The segment at 1609–1663 is disordered; it reads TRLPGILRKDSSGTSKRKSQQPRPHVHRPPSLSSNGQLPSRPQSAQISAGNTSER. The segment covering 1623–1636 has biased composition (basic residues); it reads SKRKSQQPRPHVHR. Residues 1639-1663 are compositionally biased toward polar residues; that stretch reads SLSSNGQLPSRPQSAQISAGNTSER.

Interacts with AKAP3, ODF2 and TSSK4. Interacts with AKAP4. Expressed in the sperm.

Its subcellular location is the nucleus membrane. The protein localises to the nucleus. It is found in the cytoplasm. The protein resides in the cell projection. It localises to the cilium. Its subcellular location is the flagellum. Has an essential role in the formation of sperm flagella and flagellar structure maintainance. It acts as a suppressor of ubiquitination and degradation of proteins involved in flagellar development and motility. The sequence is that of Glutamine-rich protein 2 (QRICH2) from Homo sapiens (Human).